Reading from the N-terminus, the 132-residue chain is Large ribosomal subunit protein uL14 (132 aa).

It belongs to the universal ribosomal protein uL14 family. Part of the 50S ribosomal subunit. Forms a cluster with proteins L3 and L24e, part of which may contact the 16S rRNA in 2 intersubunit bridges.

Its function is as follows. Binds to 23S rRNA. Forms part of two intersubunit bridges in the 70S ribosome. The polypeptide is Large ribosomal subunit protein uL14 (Halobacterium salinarum (strain ATCC 29341 / DSM 671 / R1)).